We begin with the raw amino-acid sequence, 193 residues long: Ribonuclease HII (193 aa).

The RNase H type-2 domain occupies 15–193 (YIVAGVDEAG…SYHRRSFKSC (179 aa)). 3 residues coordinate a divalent metal cation: Asp-21, Glu-22, and Asp-112.

This sequence belongs to the RNase HII family. Mn(2+) serves as cofactor. Requires Mg(2+) as cofactor.

It localises to the cytoplasm. It catalyses the reaction Endonucleolytic cleavage to 5'-phosphomonoester.. Its function is as follows. Endonuclease that specifically degrades the RNA of RNA-DNA hybrids. The polypeptide is Ribonuclease HII (rnhB) (Rickettsia prowazekii (strain Madrid E)).